Consider the following 232-residue polypeptide: Glutathione S-transferase U10 (232 aa).

Residues 6–85 (SKVILHGTWI…YIDETWTNSP (80 aa)) form the GST N-terminal domain. Residues 16-17 (ST), 42-43 (NK), 56-57 (KI), and 69-70 (ES) contribute to the glutathione site. A GST C-terminal domain is found at 91–226 (DPYERAQVRF…FIQKYRQKCL (136 aa)).

This sequence belongs to the GST superfamily. Tau family.

It localises to the cytoplasm. It is found in the cytosol. It catalyses the reaction RX + glutathione = an S-substituted glutathione + a halide anion + H(+). In terms of biological role, may be involved in the conjugation of reduced glutathione to a wide number of exogenous and endogenous hydrophobic electrophiles and have a detoxification role against certain herbicides. The chain is Glutathione S-transferase U10 (GSTU10) from Arabidopsis thaliana (Mouse-ear cress).